The sequence spans 299 residues: Probable alpha-L-glutamate ligase (299 aa).

In terms of domain architecture, ATP-grasp spans L112 to E294. Residues K148, D185 to F186, D194, and R218 to N220 each bind ATP. Positions 255, 267, and 269 each coordinate Mg(2+). Mn(2+) contacts are provided by D255, E267, and N269.

Belongs to the RimK family. Mg(2+) serves as cofactor. It depends on Mn(2+) as a cofactor.

The chain is Probable alpha-L-glutamate ligase from Histophilus somni (strain 2336) (Haemophilus somnus).